Consider the following 88-residue polypeptide: U24 protein (88 aa).

Residue threonine 6 is modified to Phosphothreonine. The short motif at 8–11 (PPSY) is the PPXY motif element. A helical membrane pass occupies residues 58-78 (FAFLVLTGLAIAMILFIAFVI).

In terms of assembly, interacts with host ITCH; this interaction probably mediates ITCH degradation. Interacts probably with NEDD4.

Its subcellular location is the membrane. Functionally, down-regulates the TCR/CD3E complex and the transferrin receptor TFRC in host T-cells by blocking them from recycling back to the cell surface. The protein is U24 protein (U24) of Human herpesvirus 6B (strain Z29) (HHV-6 variant B).